We begin with the raw amino-acid sequence, 415 residues long: Isocitrate dehydrogenase [NADP] (415 aa).

Residues 77-79 and arginine 84 each bind NADP(+); that span reads TIT. Substrate is bound at residue threonine 79. Residues 96 to 102, arginine 111, and arginine 134 contribute to the substrate site; that span reads SPNGTIR. Aspartate 254 provides a ligand contact to Mn(2+). Lysine 262 is a binding site for NADP(+). Aspartate 277 is a Mn(2+) binding site. Residues 312-317 and asparagine 330 contribute to the NADP(+) site; that span reads GTVTRH.

It belongs to the isocitrate and isopropylmalate dehydrogenases family. As to quaternary structure, heterodimer. Mg(2+) is required as a cofactor. The cofactor is Mn(2+).

The protein localises to the cytoplasm. It catalyses the reaction D-threo-isocitrate + NADP(+) = 2-oxoglutarate + CO2 + NADPH. Its function is as follows. May supply 2-oxoglutarate for amino acid biosynthesis and ammonia assimilation via the glutamine synthetase/glutamate synthase (GS/GOGAT) pathway. The protein is Isocitrate dehydrogenase [NADP] of Nicotiana tabacum (Common tobacco).